The primary structure comprises 452 residues: Probable V-type proton ATPase subunit H (452 aa).

This sequence belongs to the V-ATPase H subunit family. As to quaternary structure, V-ATPase is a heteromultimeric enzyme composed of a peripheral catalytic V1 complex (components A to H) attached to an integral membrane V0 proton pore complex (components: a, c, c', c'' and d).

Subunit of the peripheral V1 complex of vacuolar ATPase. Subunit H activates the ATPase activity of the enzyme and couples ATPase activity to proton flow. Vacuolar ATPase is responsible for acidifying a variety of intracellular compartments in eukaryotic cells, thus providing most of the energy required for transport processes in the vacuolar system. The protein is Probable V-type proton ATPase subunit H of Oryza sativa subsp. japonica (Rice).